The chain runs to 457 residues: Ribosome biogenesis protein YTM1 (457 aa).

Residues 8–89 form a ubiquitin-like (UBL) domain region; it reads VKVKFFTREK…ETTLTVEYTR (82 aa). The tract at residues 99–457 is sufficient for interaction with ERB1 and association with 66S pre-ribosomes; sequence NFNNDDWVSA…INKGDNIFKN (359 aa). WD repeat units follow at residues 101–140, 142–180, 203–241, 282–322, 324–363, 370–410, and 421–457; these read NNDDWVSALDVSDDFRHIYSGSYDGVVRTWNMSGKVEKQY, GHTGAVKAVKYISNTRIVSAGNDRSLRLWKTKNDDGSVS, GHKAPVVSLDVASNSRILSASYDNTVALWSTIYKEMTAI, SHTG…CIDT, TTSYPLLSIAQMPTLNLLACGSSVRHITLHDPRVSSSAKI, GHKN…PMYT, and GVNDKVFAVKWAKSIGIISGGQDKKIQINKGDNIFKN. The disordered stretch occupies residues 172–191; that stretch reads TKNDDGSVSNNTGDENDEEN.

This sequence belongs to the WD repeat WDR12/YTM1 family. As to quaternary structure, component of the NOP7 complex, composed of ERB1, NOP7 and YTM1. The complex is held together by ERB1, which interacts with NOP7 via its N-terminal domain and with YTM1 via a high-affinity interaction between the seven-bladed beta-propeller domains of the 2 proteins. The NOP7 complex associates with the 66S pre-ribosome. Interacts (via UBL domain) with MDN1 (via VWFA/MIDAS domain).

It localises to the nucleus. The protein localises to the nucleolus. The protein resides in the nucleoplasm. In terms of biological role, component of the NOP7 complex, which is required for maturation of the 25S and 5.8S ribosomal RNAs and formation of the 60S ribosome. The sequence is that of Ribosome biogenesis protein YTM1 from Candida glabrata (strain ATCC 2001 / BCRC 20586 / JCM 3761 / NBRC 0622 / NRRL Y-65 / CBS 138) (Yeast).